A 296-amino-acid chain; its full sequence is Probable deoxyuridine 5'-triphosphate nucleotidohydrolase (296 aa).

A coiled-coil region spans residues 66 to 102 (EIDKNIVKNLEDKVNCLEQDVQYLKNELKKKDADWQQ).

This sequence belongs to the dUTPase family.

The enzyme catalyses dUTP + H2O = dUMP + diphosphate + H(+). Its pathway is pyrimidine metabolism; dUMP biosynthesis; dUMP from dCTP (dUTP route): step 2/2. Its function is as follows. This enzyme is involved in nucleotide metabolism: it produces dUMP, the immediate precursor of thymidine nucleotides and it decreases the intracellular concentration of dUTP so that uracil cannot be incorporated into DNA. This is Probable deoxyuridine 5'-triphosphate nucleotidohydrolase from Acheta domesticus (House cricket).